Here is a 475-residue protein sequence, read N- to C-terminus: MSFTEEETKLGKSLFEACSFTERPIAKDSHLETVRQVMRKNIPATITTSDLGLFTDEEEATKKKEIIQGDITIDGTTPLHVICSSFPSDATAEELEVALEMMRELFQWGAGWMLLDEQGQTPGCVAWDRSKAEARDSVLASVYNEIVSAGTRSEVFLRRINKSENVEFLSDDDDEEMDVDDDEEDESRDGEETGDIQQAIADAIKQAKEAGLEVVVDGETVEEVPELVGDKEDEKNNESAAQNEVDLAGSQMDYLKDKLTYTDDNKTLITTQNDGVMMDWEDEIMQKSADLLVSRADKESDGPVVLNVGFGLGIIDTYLQSKKPSKHYICEAHPDVLEKMEKDGWMDKPGVTVLVGRWQDTLPGLLSQGVYFDGMYYDTFSENYSDLVDFFDHVVGLLAPTGVFSFFNGLGADRQVCYDVYKNVVEVDLQEYGLNVEYQVIKVNKDVTGADGHVWDGIKRRYWVVEDFYLPVCTF.

Positions 167–194 (EFLSDDDDEEMDVDDDEEDESRDGEETG) are disordered. A compositionally biased stretch (acidic residues) spans 169–194 (LSDDDDEEMDVDDDEEDESRDGEETG). Positions 247–475 (LAGSQMDYLK…EDFYLPVCTF (229 aa)) constitute an RMT2 domain. Residues tyrosine 254, methionine 285, 310 to 315 (FGLGII), 331 to 333 (EAH), 358 to 359 (WQ), and aspartate 378 each bind S-adenosyl-L-methionine.

Belongs to the class I-like SAM-binding methyltransferase superfamily. RMT2 methyltransferase family. Monomer.

The protein resides in the cytoplasm. The protein localises to the nucleus. S-adenosyl-L-methionine-dependent protein-arginine N-methyltransferase that methylates the delta-nitrogen atom of arginine residues to form N5-methylarginine (type IV) in target proteins. Monomethylates ribosomal protein L12. This Yarrowia lipolytica (strain CLIB 122 / E 150) (Yeast) protein is Protein arginine N-methyltransferase 2.